The sequence spans 344 residues: MTQAATRPTAEIGNEDILAVARRQVLEGGQGLSRDQVLQVLRLPDDRLDDLLALAHEVRMRWCGPEVEVEGIISLKTGGCPEDCHFCSQSGLFASPVRSARLDIPSLVEAAKQTAKSGATEFCIVAAVRGPDERLLAQVAAGIEAVRNEVEINIACSLGMLTAEQVEQLAEMGVHRYNHNLETARSFFPNVVTTHTWEERWDTLSMVRDAGMEVCCGGILGMGETLEQRAEFAAELAELGPDEVPLNFLNPRPGTPFGDLEVMPATEALKSVAAFRLALPRTMLRFAGGREITLGDLGAKKGILGGINAVIVGNYLTTLGRPAESDLELLDDLQMPLKGLNASL.

One can recognise a Radical SAM core domain in the interval 65 to 290 (PEVEVEGIIS…RTMLRFAGGR (226 aa)). C80, C84, and C87 together coordinate [4Fe-4S] cluster. 4 residues coordinate [2Fe-2S] cluster: C123, C156, C215, and R285.

It belongs to the radical SAM superfamily. Biotin synthase family. Homodimer. It depends on [4Fe-4S] cluster as a cofactor. [2Fe-2S] cluster serves as cofactor.

It catalyses the reaction (4R,5S)-dethiobiotin + (sulfur carrier)-SH + 2 reduced [2Fe-2S]-[ferredoxin] + 2 S-adenosyl-L-methionine = (sulfur carrier)-H + biotin + 2 5'-deoxyadenosine + 2 L-methionine + 2 oxidized [2Fe-2S]-[ferredoxin]. The protein operates within cofactor biosynthesis; biotin biosynthesis; biotin from 7,8-diaminononanoate: step 2/2. Its function is as follows. Catalyzes the conversion of dethiobiotin (DTB) to biotin by the insertion of a sulfur atom into dethiobiotin via a radical-based mechanism. In Mycolicibacterium paratuberculosis (strain ATCC BAA-968 / K-10) (Mycobacterium paratuberculosis), this protein is Biotin synthase.